The chain runs to 374 residues: DNA replication and repair protein RecF (374 aa).

Residue 34-41 coordinates ATP; it reads GNNGSGKT.

The protein belongs to the RecF family.

The protein localises to the cytoplasm. Functionally, the RecF protein is involved in DNA metabolism; it is required for DNA replication and normal SOS inducibility. RecF binds preferentially to single-stranded, linear DNA. It also seems to bind ATP. The chain is DNA replication and repair protein RecF from Allorhizobium ampelinum (strain ATCC BAA-846 / DSM 112012 / S4) (Agrobacterium vitis (strain S4)).